The sequence spans 343 residues: Dihydroorotase (343 aa).

Residues histidine 13 and histidine 15 each coordinate Zn(2+). Substrate contacts are provided by residues 15-17 (HLR) and asparagine 41. Zn(2+) is bound by residues lysine 99, histidine 136, and histidine 174. The residue at position 99 (lysine 99) is an N6-carboxylysine. Histidine 136 lines the substrate pocket. Leucine 219 provides a ligand contact to substrate. A Zn(2+)-binding site is contributed by aspartate 247. Aspartate 247 is a catalytic residue. Substrate-binding residues include histidine 251 and alanine 263.

This sequence belongs to the metallo-dependent hydrolases superfamily. DHOase family. Class II DHOase subfamily. In terms of assembly, homodimer. It depends on Zn(2+) as a cofactor.

It catalyses the reaction (S)-dihydroorotate + H2O = N-carbamoyl-L-aspartate + H(+). It participates in pyrimidine metabolism; UMP biosynthesis via de novo pathway; (S)-dihydroorotate from bicarbonate: step 3/3. In terms of biological role, catalyzes the reversible cyclization of carbamoyl aspartate to dihydroorotate. This chain is Dihydroorotase, found in Alkalilimnicola ehrlichii (strain ATCC BAA-1101 / DSM 17681 / MLHE-1).